The chain runs to 296 residues: Homoserine kinase (296 aa).

84–94 lines the ATP pocket; sequence PLARGLGSSSS.

It belongs to the GHMP kinase family. Homoserine kinase subfamily.

The protein resides in the cytoplasm. It catalyses the reaction L-homoserine + ATP = O-phospho-L-homoserine + ADP + H(+). It participates in amino-acid biosynthesis; L-threonine biosynthesis; L-threonine from L-aspartate: step 4/5. Functionally, catalyzes the ATP-dependent phosphorylation of L-homoserine to L-homoserine phosphate. The chain is Homoserine kinase from Lactococcus lactis subsp. cremoris (strain SK11).